The sequence spans 212 residues: tRNA (guanine-N(7)-)-methyltransferase (212 aa).

S-adenosyl-L-methionine contacts are provided by Glu44, Asp69, Asp96, and Asp118. Asp118 is a catalytic residue. Substrate is bound at residue Lys122. The interval 124-129 (RHEKRR) is interaction with RNA. Substrate contacts are provided by residues Asp154 and 191-194 (TEYE).

Belongs to the class I-like SAM-binding methyltransferase superfamily. TrmB family.

The catalysed reaction is guanosine(46) in tRNA + S-adenosyl-L-methionine = N(7)-methylguanosine(46) in tRNA + S-adenosyl-L-homocysteine. It functions in the pathway tRNA modification; N(7)-methylguanine-tRNA biosynthesis. Its function is as follows. Catalyzes the formation of N(7)-methylguanine at position 46 (m7G46) in tRNA. The protein is tRNA (guanine-N(7)-)-methyltransferase of Streptococcus sanguinis (strain SK36).